Consider the following 447-residue polypeptide: Argininosuccinate synthase (447 aa).

Residues 17 to 25 and alanine 43 each bind ATP; that span reads AFSGGLDTS. Position 99 (tyrosine 99) interacts with L-citrulline. The ATP site is built by glycine 129 and threonine 131. Residues threonine 131, asparagine 135, and aspartate 136 each contribute to the L-aspartate site. Asparagine 135 provides a ligand contact to L-citrulline. An ATP-binding site is contributed by aspartate 136. Positions 139 and 192 each coordinate L-citrulline. ATP is bound at residue aspartate 194. Threonine 201, glutamate 203, and glutamate 280 together coordinate L-citrulline.

It belongs to the argininosuccinate synthase family. Type 2 subfamily. In terms of assembly, homotetramer.

It localises to the cytoplasm. It catalyses the reaction L-citrulline + L-aspartate + ATP = 2-(N(omega)-L-arginino)succinate + AMP + diphosphate + H(+). The protein operates within amino-acid biosynthesis; L-arginine biosynthesis; L-arginine from L-ornithine and carbamoyl phosphate: step 2/3. The polypeptide is Argininosuccinate synthase (Janthinobacterium sp. (strain Marseille) (Minibacterium massiliensis)).